Here is a 98-residue protein sequence, read N- to C-terminus: Integration host factor subunit beta (98 aa).

The protein belongs to the bacterial histone-like protein family. In terms of assembly, heterodimer of an alpha and a beta chain.

In terms of biological role, this protein is one of the two subunits of integration host factor, a specific DNA-binding protein that functions in genetic recombination as well as in transcriptional and translational control. The chain is Integration host factor subunit beta from Pseudomonas syringae pv. tomato (strain ATCC BAA-871 / DC3000).